Consider the following 239-residue polypeptide: 1-(5-phosphoribosyl)-5-[(5-phosphoribosylamino)methylideneamino] imidazole-4-carboxamide isomerase (239 aa).

Asp-8 functions as the Proton acceptor in the catalytic mechanism. Asp-129 serves as the catalytic Proton donor.

It belongs to the HisA/HisF family.

It is found in the cytoplasm. The catalysed reaction is 1-(5-phospho-beta-D-ribosyl)-5-[(5-phospho-beta-D-ribosylamino)methylideneamino]imidazole-4-carboxamide = 5-[(5-phospho-1-deoxy-D-ribulos-1-ylimino)methylamino]-1-(5-phospho-beta-D-ribosyl)imidazole-4-carboxamide. The protein operates within amino-acid biosynthesis; L-histidine biosynthesis; L-histidine from 5-phospho-alpha-D-ribose 1-diphosphate: step 4/9. The polypeptide is 1-(5-phosphoribosyl)-5-[(5-phosphoribosylamino)methylideneamino] imidazole-4-carboxamide isomerase (Pelagibacter ubique (strain HTCC1062)).